Reading from the N-terminus, the 275-residue chain is S-methyl-5'-thioadenosine phosphorylase (275 aa).

Phosphate is bound by residues serine 20, 62–63 (RH), and 95–96 (SA). 3 disulfide bridges follow: cysteine 143/cysteine 210, cysteine 205/cysteine 266, and cysteine 264/cysteine 267. Methionine 195 lines the substrate pocket. Threonine 196 is a phosphate binding site. 219–221 (DYD) lines the substrate pocket.

This sequence belongs to the PNP/MTAP phosphorylase family. MTAP subfamily. As to quaternary structure, homohexamer. Dimer of a homotrimer.

It carries out the reaction S-methyl-5'-thioadenosine + phosphate = 5-(methylsulfanyl)-alpha-D-ribose 1-phosphate + adenine. It functions in the pathway amino-acid biosynthesis; L-methionine biosynthesis via salvage pathway; S-methyl-5-thio-alpha-D-ribose 1-phosphate from S-methyl-5'-thioadenosine (phosphorylase route): step 1/1. Catalyzes the reversible phosphorylation of S-methyl-5'-thioadenosine (MTA) to adenine and 5-methylthioribose-1-phosphate. Involved in the breakdown of MTA, a major by-product of polyamine biosynthesis. Responsible for the first step in the methionine salvage pathway after MTA has been generated from S-adenosylmethionine. Has broad substrate specificity with 6-aminopurine nucleosides as preferred substrates. This chain is S-methyl-5'-thioadenosine phosphorylase, found in Aeropyrum pernix (strain ATCC 700893 / DSM 11879 / JCM 9820 / NBRC 100138 / K1).